A 101-amino-acid chain; its full sequence is Small ribosomal subunit protein uS10 (101 aa).

This sequence belongs to the universal ribosomal protein uS10 family. As to quaternary structure, part of the 30S ribosomal subunit.

Functionally, involved in the binding of tRNA to the ribosomes. The chain is Small ribosomal subunit protein uS10 from Bacteroides fragilis (strain ATCC 25285 / DSM 2151 / CCUG 4856 / JCM 11019 / LMG 10263 / NCTC 9343 / Onslow / VPI 2553 / EN-2).